We begin with the raw amino-acid sequence, 611 residues long: 1,4-alpha-glucan branching enzyme GlgB (611 aa).

The Nucleophile role is filled by Asp302. The active-site Proton donor is the Glu343.

The protein belongs to the glycosyl hydrolase 13 family. GlgB subfamily. In terms of assembly, monomer.

It carries out the reaction Transfers a segment of a (1-&gt;4)-alpha-D-glucan chain to a primary hydroxy group in a similar glucan chain.. The protein operates within glycan biosynthesis; glycogen biosynthesis. Catalyzes the formation of the alpha-1,6-glucosidic linkages in glycogen by scission of a 1,4-alpha-linked oligosaccharide from growing alpha-1,4-glucan chains and the subsequent attachment of the oligosaccharide to the alpha-1,6 position. In Fusobacterium nucleatum subsp. nucleatum (strain ATCC 25586 / DSM 15643 / BCRC 10681 / CIP 101130 / JCM 8532 / KCTC 2640 / LMG 13131 / VPI 4355), this protein is 1,4-alpha-glucan branching enzyme GlgB.